We begin with the raw amino-acid sequence, 184 residues long: Large ribosomal subunit protein eL13 (184 aa).

A disordered region spans residues 28–53 (PARKERRRQARKAKAQRIAPRPASGP). Over residues 31 to 42 (KERRRQARKAKA) the composition is skewed to basic residues.

The protein belongs to the eukaryotic ribosomal protein eL13 family.

The sequence is that of Large ribosomal subunit protein eL13 (RPL13) from Schistosoma mansoni (Blood fluke).